We begin with the raw amino-acid sequence, 715 residues long: Fatty acid oxidation complex subunit alpha (715 aa).

The enoyl-CoA hydratase/isomerase stretch occupies residues 1–190 (MIYEGKAITV…KVGAVDAVVA (190 aa)). Asp297 contacts substrate. The interval 312-715 (KDVKQAAVLG…MAKNGQSFFG (404 aa)) is 3-hydroxyacyl-CoA dehydrogenase. Residues Met325, Asp344, 401-403 (VVE), Lys408, and Ser430 each bind NAD(+). Residue His451 is the For 3-hydroxyacyl-CoA dehydrogenase activity of the active site. Asn454 lines the NAD(+) pocket. Residues Asn501 and Tyr660 each contribute to the substrate site.

In the N-terminal section; belongs to the enoyl-CoA hydratase/isomerase family. It in the C-terminal section; belongs to the 3-hydroxyacyl-CoA dehydrogenase family. Heterotetramer of two alpha chains (FadB) and two beta chains (FadA).

The catalysed reaction is a (3S)-3-hydroxyacyl-CoA + NAD(+) = a 3-oxoacyl-CoA + NADH + H(+). It catalyses the reaction a (3S)-3-hydroxyacyl-CoA = a (2E)-enoyl-CoA + H2O. The enzyme catalyses a 4-saturated-(3S)-3-hydroxyacyl-CoA = a (3E)-enoyl-CoA + H2O. It carries out the reaction (3S)-3-hydroxybutanoyl-CoA = (3R)-3-hydroxybutanoyl-CoA. The catalysed reaction is a (3Z)-enoyl-CoA = a 4-saturated (2E)-enoyl-CoA. It catalyses the reaction a (3E)-enoyl-CoA = a 4-saturated (2E)-enoyl-CoA. Its pathway is lipid metabolism; fatty acid beta-oxidation. Its function is as follows. Involved in the aerobic and anaerobic degradation of long-chain fatty acids via beta-oxidation cycle. Catalyzes the formation of 3-oxoacyl-CoA from enoyl-CoA via L-3-hydroxyacyl-CoA. It can also use D-3-hydroxyacyl-CoA and cis-3-enoyl-CoA as substrate. This chain is Fatty acid oxidation complex subunit alpha, found in Pseudomonas fluorescens (strain Pf0-1).